Here is a 292-residue protein sequence, read N- to C-terminus: MNHQSEKINHILEALPYLINYSGKTIVIKYGGAAMVEEELKASFAEDIVLLKYLGINPVVVHGGGPEINSLIKSLNLNTQFIRGHRVTDEATMEVVEMVLTGKVNKQIVSLIQEKGGKPVGLSGKDGGLAIAEKYLMEVEAEDGKSQKIDLGLVGEITSVDPNIILTLQREGFIPIISPVAMSKEGQTLNINADTMAGAIAQALHADKLILLTDTPGILIDGQLVTGLKKVDIHGYIKTGQISGGMIPKVECCLGAIDSGVKRAHIIDGRVPHSVLIEILTNQGIGSLIEQG.

Substrate contacts are provided by residues 64–65, Arg86, and Asn190; that span reads GG.

The protein belongs to the acetylglutamate kinase family. ArgB subfamily.

The protein localises to the cytoplasm. It catalyses the reaction N-acetyl-L-glutamate + ATP = N-acetyl-L-glutamyl 5-phosphate + ADP. Its pathway is amino-acid biosynthesis; L-arginine biosynthesis; N(2)-acetyl-L-ornithine from L-glutamate: step 2/4. Functionally, catalyzes the ATP-dependent phosphorylation of N-acetyl-L-glutamate. The chain is Acetylglutamate kinase from Leptospira biflexa serovar Patoc (strain Patoc 1 / Ames).